Reading from the N-terminus, the 117-residue chain is uncharacterized protein (117 aa).

Its subcellular location is the cytoplasm. The protein localises to the nucleus. This is an uncharacterized protein from Schizosaccharomyces pombe (strain 972 / ATCC 24843) (Fission yeast).